A 503-amino-acid polypeptide reads, in one-letter code: Nuclear respiratory factor 1 (503 aa).

A dimerization region spans residues 1-78; the sequence is MEEHGVTQTE…AHLAAAGPVG (78 aa). The tract at residues 36–57 is disordered; the sequence is SMLSADEDSPSSPEDTSYDDSD. Phosphoserine; by CK2 occurs at positions 39, 44, 46, 47, and 52. A Nuclear localization signal motif is present at residues 88-116; the sequence is GKKRKRPHVFESNPSIRKRQQTRLLRKLR. Residues 109 to 305 mediate DNA binding; sequence TRLLRKLRAT…SIAHLVPSQT (197 aa). A Glycyl lysine isopeptide (Lys-Gly) (interchain with G-Cter in SUMO2) cross-link involves residue Lys139. Residues 301–476 are required for transcriptional activation; it reads VPSQTVVQTF…AQGNGPVQVA (176 aa).

The protein belongs to the NRF1/Ewg family. In terms of assembly, homodimer. Binds DNA as a dimer. Interacts with PPRC1. Post-translationally, phosphorylation enhances DNA binding. As to expression, widely expressed in embryonic, fetal, and adult tissues.

It localises to the nucleus. In terms of biological role, transcription factor that activates the expression of the EIF2S1 (EIF2-alpha) gene. Links the transcriptional modulation of key metabolic genes to cellular growth and development. Implicated in the control of nuclear genes required for respiration, heme biosynthesis, and mitochondrial DNA transcription and replication. This Mus musculus (Mouse) protein is Nuclear respiratory factor 1 (Nrf1).